The sequence spans 81 residues: Apolipoprotein C-I, acidic form (81 aa).

The N-terminal stretch at 1–24 (MRLFLSLLVVVLSIVLEGPTPAQG) is a signal peptide.

Belongs to the apolipoprotein C1 family.

It localises to the secreted. The protein is Apolipoprotein C-I, acidic form (APOC1A) of Cercocebus atys (Sooty mangabey).